Reading from the N-terminus, the 365-residue chain is Aminomethyltransferase (365 aa).

It belongs to the GcvT family. The glycine cleavage system is composed of four proteins: P, T, L and H.

The enzyme catalyses N(6)-[(R)-S(8)-aminomethyldihydrolipoyl]-L-lysyl-[protein] + (6S)-5,6,7,8-tetrahydrofolate = N(6)-[(R)-dihydrolipoyl]-L-lysyl-[protein] + (6R)-5,10-methylene-5,6,7,8-tetrahydrofolate + NH4(+). The glycine cleavage system catalyzes the degradation of glycine. The sequence is that of Aminomethyltransferase from Erwinia tasmaniensis (strain DSM 17950 / CFBP 7177 / CIP 109463 / NCPPB 4357 / Et1/99).